A 155-amino-acid polypeptide reads, in one-letter code: Phospholipase A2 A2-actitoxin-Ucs2a (155 aa).

The first 19 residues, 1 to 19, serve as a signal peptide directing secretion; that stretch reads MKNNIILVILLGISVFVDC. Positions 20 to 42 are excised as a propeptide; the sequence is LPLNDQEEDKSLNAQESEVSAVQ. Cystine bridges form between cysteine 55–cysteine 118, cysteine 71–cysteine 87, cysteine 86–cysteine 143, cysteine 93–cysteine 136, cysteine 100–cysteine 129, and cysteine 122–cysteine 134. The Ca(2+) site is built by glycine 72 and glycine 74. Histidine 90 is a catalytic residue. Residue aspartate 91 participates in Ca(2+) binding. Aspartate 137 is a catalytic residue.

It belongs to the phospholipase A2 family. Ca(2+) is required as a cofactor.

The protein localises to the secreted. Its subcellular location is the nematocyst. The catalysed reaction is a 1,2-diacyl-sn-glycero-3-phosphocholine + H2O = a 1-acyl-sn-glycero-3-phosphocholine + a fatty acid + H(+). Its function is as follows. PLA2 catalyzes the calcium-dependent hydrolysis of the 2-acyl groups in 3-sn-phosphoglycerides. This chain is Phospholipase A2 A2-actitoxin-Ucs2a, found in Urticina crassicornis (Mottled anemone).